The chain runs to 148 residues: Snaclec 3 (148 aa).

The signal sequence occupies residues 1 to 23 (MGRFISVSFGLLVVFLSLSGTEA). 3 disulfide bridges follow: cysteine 27/cysteine 38, cysteine 55/cysteine 144, and cysteine 121/cysteine 136. The region spanning 34–145 (YDQNCYKVFT…CSSTHNFVCK (112 aa)) is the C-type lectin domain.

It belongs to the snaclec family. As to quaternary structure, heterodimer; disulfide-linked.

Its subcellular location is the secreted. Functionally, interferes with one step of hemostasis (modulation of platelet aggregation, or coagulation cascade, for example). This Daboia siamensis (Eastern Russel's viper) protein is Snaclec 3.